The following is a 300-amino-acid chain: Probable endonuclease 4 (300 aa).

Positions 69, 110, 145, 179, 182, 214, 227, 229, and 259 each coordinate Zn(2+).

Belongs to the AP endonuclease 2 family. Zn(2+) serves as cofactor.

The catalysed reaction is Endonucleolytic cleavage to 5'-phosphooligonucleotide end-products.. Endonuclease IV plays a role in DNA repair. It cleaves phosphodiester bonds at apurinic or apyrimidinic (AP) sites, generating a 3'-hydroxyl group and a 5'-terminal sugar phosphate. This Lachnoclostridium phytofermentans (strain ATCC 700394 / DSM 18823 / ISDg) (Clostridium phytofermentans) protein is Probable endonuclease 4.